We begin with the raw amino-acid sequence, 150 residues long: Profilin (150 aa).

The protein belongs to the profilin family. In terms of assembly, occurs in many kinds of cells as a complex with monomeric actin in a 1:1 ratio.

The protein localises to the cytoplasm. The protein resides in the cytoskeleton. Binds to actin and affects the structure of the cytoskeleton. At high concentrations, profilin prevents the polymerization of actin, whereas it enhances it at low concentrations. By binding to PIP2, it inhibits the formation of IP3 and DG. This is Profilin from Trypanosoma brucei brucei.